Consider the following 64-residue polypeptide: Large ribosomal subunit protein bL35 (64 aa).

The segment covering methionine 1 to arginine 24 has biased composition (basic residues). A disordered region spans residues methionine 1 to alanine 64. Positions glutamate 25–lysine 35 are enriched in basic and acidic residues. Positions lysine 36–histidine 45 are enriched in basic residues.

This sequence belongs to the bacterial ribosomal protein bL35 family.

The sequence is that of Large ribosomal subunit protein bL35 from Prosthecochloris aestuarii (strain DSM 271 / SK 413).